The primary structure comprises 103 residues: Mitochondrial import inner membrane translocase subunit Tim10 B (103 aa).

The Twin CX3C motif signature appears at 28-52 (CFQRCVPSLHHRALDAEEEACLHSC). 2 disulfides stabilise this stretch: Cys-28–Cys-52 and Cys-32–Cys-48.

It belongs to the small Tim family. In terms of assembly, component of the TIM22 complex, which core is composed of TIMM22, associated with TIMM10 (TIMM10A and/or TIMM10B), TIMM9, AGK and TIMM29. In terms of tissue distribution, ubiquitous, with highest expression in heart, kidney, liver and skeletal muscle.

It is found in the mitochondrion inner membrane. Component of the TIM22 complex, a complex that mediates the import and insertion of multi-pass transmembrane proteins into the mitochondrial inner membrane. The TIM22 complex forms a twin-pore translocase that uses the membrane potential as the external driving force. In the TIM22 complex, it may act as a docking point for the soluble 70 kDa complex that guides the target proteins in transit through the aqueous mitochondrial intermembrane space. The chain is Mitochondrial import inner membrane translocase subunit Tim10 B (TIMM10B) from Homo sapiens (Human).